The sequence spans 129 residues: Follitropin subunit beta (129 aa).

An N-terminal signal peptide occupies residues 1 to 20 (MKTVQFCFLFCCWKAICCNS). 6 disulfide bridges follow: Cys-21/Cys-69, Cys-35/Cys-84, Cys-38/Cys-122, Cys-46/Cys-100, Cys-50/Cys-102, and Cys-105/Cys-112. Asn-25 and Asn-42 each carry an N-linked (GlcNAc...) asparagine glycan.

This sequence belongs to the glycoprotein hormones subunit beta family. In terms of assembly, heterodimer. The active follitropin is a heterodimer composed of an alpha chain/CGA shared with other hormones and a unique beta chain/FSHB shown here.

It is found in the secreted. Together with the alpha chain CGA constitutes follitropin, the follicle-stimulating hormone, and provides its biological specificity to the hormone heterodimer. Binds FSHR, a G protein-coupled receptor, on target cells to activate downstream signaling pathways. Follitropin is involved in follicle development and spermatogenesis in reproductive organs. The chain is Follitropin subunit beta (FSHB) from Saimiri boliviensis boliviensis (Bolivian squirrel monkey).